Here is a 366-residue protein sequence, read N- to C-terminus: Peptide chain release factor 2 (366 aa).

Glutamine 253 carries the N5-methylglutamine modification.

This sequence belongs to the prokaryotic/mitochondrial release factor family. Methylated by PrmC. Methylation increases the termination efficiency of RF2.

The protein resides in the cytoplasm. Functionally, peptide chain release factor 2 directs the termination of translation in response to the peptide chain termination codons UGA and UAA. The sequence is that of Peptide chain release factor 2 from Yersinia pseudotuberculosis serotype I (strain IP32953).